A 20-amino-acid polypeptide reads, in one-letter code: U1-poneritoxin-Ni1a (20 aa).

Lysine amide is present on Lys20.

Belongs to the non-disulfide-bridged peptide (NDBP) superfamily. Medium-length antimicrobial peptide (group 3) family. Ponericin-W subfamily. As to expression, expressed by the venom gland.

The protein resides in the secreted. The protein localises to the target cell membrane. Its function is as follows. Has activity against Gram-positive bacteria. Has insecticidal and hemolytic activities. May act by disrupting the integrity of the bacterial cell membrane. This chain is U1-poneritoxin-Ni1a, found in Neoponera inversa (Ant).